The primary structure comprises 901 residues: Viral-enhancing factor (901 aa).

Residues 27-330 enclose the Peptidase M60 domain; that stretch reads HRRTEVGVVL…IFTWLYNPQR (304 aa). Asn-65, Asn-265, Asn-339, Asn-349, Asn-540, Asn-594, Asn-595, Asn-642, Asn-683, and Asn-698 each carry an N-linked (GlcNAc...) asparagine; by host glycan.

In terms of biological role, involved in disruption of the peritrophic membrane and fusion of nucleocapsids with midgut cells. The protein is Viral-enhancing factor (VEF) of Trichoplusia ni (Cabbage looper).